The sequence spans 347 residues: Protein RecA (347 aa).

ATP is bound at residue 80 to 87 (GPESSGKT).

It belongs to the RecA family.

The protein localises to the cytoplasm. In terms of biological role, can catalyze the hydrolysis of ATP in the presence of single-stranded DNA, the ATP-dependent uptake of single-stranded DNA by duplex DNA, and the ATP-dependent hybridization of homologous single-stranded DNAs. It interacts with LexA causing its activation and leading to its autocatalytic cleavage. This Chlorobaculum parvum (strain DSM 263 / NCIMB 8327) (Chlorobium vibrioforme subsp. thiosulfatophilum) protein is Protein RecA.